A 2335-amino-acid chain; its full sequence is MFTTMSLVTSIKDYVEVVHKLIETDPNFNITTYYDFGSILTFVILSGKDLIGKFLSFQWFQTIWSIPTLIPDIASAMISEISIFDGYFQNTQTLLESPISYGNNNFFIYCSEKFMIGLLNSVFLCLPTSIAHIITLRRFVMQGLEAGFISGLGTIAGNIVWIGSIVFGLRFVVIPWLSLDLFRAFLGFVLIVKYMWDSYTERRMVLEDLSKYKIFFLTFLLSFTEQTTIYPFLSNLSLGSDSTLLESFPTENFYEFGFVHLCYLLGILVGSLSLLQFTCWFWENPAFQIYMWFISSFKTTTSVYSKFVNLTFLYLTMICAISNIAYFGLDYTLTNPLGFVHEDRLLDQKALLETAFLNTKASDRNTRRNRGRHGRRERWKRRVRRYRTFDASLYDQGVYDLLTLEDLNYGFDRFWLRRKIRNHRVRFRFFPGPWMRSFKKQLSRPRLESFMGPRVEFFRILFEQAYHPEFHEFSTKKNVLKQNQTSTQSSSSNQFQIPFFGQQNNERSAKGEKMENIQSIYWNPIGNKKEKLLKEQSTLRKFVRKVNTRIQVAKIQSELKRPQNLELSLENSKNLTQPISSKAWNSFAVLETGDLNSTQFTLNKDGNQRKDLSVFKKSEENILFQRFYNKIFLEQNQKKNIFGVKTSESLSGKNFENNFQNTLSKKERFLERYKTFLRTPAAVSEQKQLKIQTKNSSEKSMLLPLTSETSSFNTFSQKPNSSSSILSQKNLETQSNLRNLQNESQYRSMTLLHPLKFYFQKEQAFQRKLNFYGVKLFRNFGVENNAPYYRVMMKRFFYHYKPTLRWERTLRVATMRRARRKSSRIPRKFNVSKSSQILATGSADFNTLEKENNLKKNQVFDQSVITKPTHFYSLVEKRASRYRYQIYKDVLQHWYYSPLNRFLLKVDVDSFIRRQPKSYFLTKNDEKFLHLKRQLLSEYYETLRWYTYMQHYSTMKNQIGGTKSLSSRAYNQQFVGTFKKIRHLFNITPTLNDTNVLKFDQPLYNEYKNSQNLSVFNESIVHEELLADDFFFLKNEKKEKNTATSESISFNQTKEKSNSTLGRLPDDLPNQSANILREYLATATPIRQEYIQNLLREKNYWELTKFLFRGQKIRGTNPITNETTFLNQEKTYLLDSKFKTPEFDTQKFKEEMWISLLKKCQNKLYDQEALKNYVTLKKEKYENKKQKHERYLKNRLERMKEAFILQNRGEQKQNGNFEFQNFSGYTSSIQKAMKESIIWEKNSLSSSSFQTIDKFFAKKNFLQKTNIRNNRPNIYLGLKENLNVSDLQENKNQQNFDSTQTNQVNPQKMQAFVFTTSLKNSFKQRAFEIIEAENLFKKNFSSSKFEKKSFLLNSKPMNAIQKFFSNTLRFKNFTSSNQVLQTPKPKFIQNIPILSKIVSIGKYGTRETSQKNLDFWKKRENALSKRRKIRKTLKRLRNQNTSTEKIVFENRDFGSQMQTSQLTKNSFNPSRQKTDKNLENSLDSVNSFFSKIERTNDFSEKEQGTRSESWKKYYSYKPNQNQSKNNEESLVSERETFMQKLVALPKNVFEKGQKSFFPKKFQRKRSRLRRYSSFKGRGPIKKRTLREKLKRQFKSLKKYGTTQENSTSQQIQLERENKKFELIQLITQRSSVLRGDQKFLKREQKQRRTRQMKHRAWKKKKQNFAQKRRKLRKRRRSTIAKIRVFNKKLQRILSKKEIQKWWWQTFFPTFQKETETTWQNQKNMQIRKELFELSEKEILERDQMTNAIEQNNEKTENAFQALQIGDKDYKPFAIPEALRIREKLIQKDILRFNGPKENSFIESSTNSFDNSKNLNASTSEEFKLQNSRNLSSQMSQTMVDSQSNFDFFEKVTGNISTNQANISNLSNSLQTQKFLVGTNPIPFYAGWDESLRKFVITNRLLSRKENFVFSTKAINTLFAAQQTNKNDSTLRQEFSKAPLQGMNAATTLYWQIPFTTYDPDQFFALGMDGFSPLGWRNFSFKHSKQTTKPILVKNFFSFQNNSKEFSKNLQFKFLQNTLKTKIFNPNTCNNVQNCLNLNEFEKTNTVGFSTTSQKKLFSKAEIDKNFEYRRILKKQKRIKKHPRPPVWFPSGSLSQQVLPVHYIYVFYKRSRLPRDRYIRRRLRSTFLKNKNSTETFANNPTITKITDFTLRKRTKPRRKYHRKRFLLDTNQFLLRRRKFRSFLDENETIRPSSKLFETSKQEKRILKSKQRRKITDSKQSTENLRLRQLRRRVQRQVFRPVSRYQPRAGGFVWPGDYLRLELVKAPQLNTTPLSSGGTQENIEVFQQENSSRKIRKKKRRTLQEWQIQPKKYLLEKHNIKVLKKRLKKSLQNTNF.

Transmembrane regions (helical) follow at residues phenylalanine 114–isoleucine 134, phenylalanine 148–phenylalanine 167, valine 172–tyrosine 194, isoleucine 214–serine 234, glutamate 255–leucine 275, and phenylalanine 307–phenylalanine 327. Residues alanine 1043 to glutamine 1052 are compositionally biased toward polar residues. Residues alanine 1043–leucine 1064 form a disordered region. Coiled-coil stretches lie at residues valine 1174–alanine 1202 and lysine 1417–valine 1447. The span at glutamine 1458–arginine 1471 shows a compositional bias: polar residues. Residues glutamine 1458–glutamate 1479 form a disordered region. The chain crosses the membrane as a helical span at residues valine 2086–phenylalanine 2106. A disordered region spans residues lysine 2200 to glutamate 2222.

Belongs to the ycf78 family.

The protein localises to the plastid. The protein resides in the chloroplast membrane. This is an uncharacterized protein from Tetradesmus obliquus (Green alga).